An 80-amino-acid polypeptide reads, in one-letter code: WAP four-disulfide core domain protein 15B (80 aa).

The first 20 residues, 1 to 20, serve as a signal peptide directing secretion; it reads MKLLGLSLLAVTILLCCNMA. In terms of domain architecture, WAP spans 29–76; it reads VFSKPGYCPEYRVPCPFVLIPKCRRDKGCKDALKCCFFYCQMRCVDPW. Cystine bridges form between C36-C64, C43-C68, C51-C63, and C57-C72.

As to expression, constitutively expressed in kidney and epididymis.

The protein resides in the secreted. Its function is as follows. Antibacterial protein which inhibits the growth of E.coli and S.aureus. The protein is WAP four-disulfide core domain protein 15B (Wfdc15b) of Mus musculus (Mouse).